The chain runs to 269 residues: Surfeit locus protein 4 (269 aa).

5 helical membrane passes run 65–85 (LASS…VLVL), 92–112 (YACF…SILW), 179–199 (FFSI…AIGF), 203–223 (LAAL…NAFW), and 242–262 (TMSV…GVSM). Positions 266 to 269 (KKEW) match the Di-lysine motif motif.

It belongs to the SURF4 family. As to quaternary structure, found in a complex composed at least of SURF4, TMED2 and TMED10. May interact with LMAN1. Interacts with ZFYVE27 and with KIF5A in a ZFYVE27-dependent manner. Interacts with STING1. Interacts with SAR1B. Interacts with TMEM41B.

The protein resides in the endoplasmic reticulum membrane. Its subcellular location is the endoplasmic reticulum-Golgi intermediate compartment membrane. The protein localises to the golgi apparatus membrane. Functionally, endoplasmic reticulum cargo receptor that mediates the export of lipoproteins by recruiting cargos into COPII vesicles to facilitate their secretion. Acts as a cargo receptor for lipoproteins bearing both APOB and APOA1, thereby regulating lipoprotein delivery and the maintenance of lipid homeostasis. Synergizes with the GTPase SAR1B to mediate transport of circulating lipoproteins. Promotes the secretion of PCSK9. Also mediates the efficient secretion of erythropoietin (EPO). May also play a role in the maintenance of the architecture of the endoplasmic reticulum-Golgi intermediate compartment and of the Golgi. The chain is Surfeit locus protein 4 from Mus musculus (Mouse).